The chain runs to 199 residues: Charged multivesicular body protein 1B1 (199 aa).

The stretch at 10–48 (NLKFAAKELNRSSKKCDKEEKAEKAKIKKAIQKGNMEVA) forms a coiled coil. The segment at 132 to 156 (MEDTMSSTTTLTTPQNQVDMLLQEM) is interaction with IST1. The segment at 167–199 (ELPQGQTGSVGTSVASAEQDELSQRLARLRDQV) is disordered. Over residues 170 to 182 (QGQTGSVGTSVAS) the composition is skewed to polar residues. Positions 174–199 (GSVGTSVASAEQDELSQRLARLRDQV) are interaction with SPAST. Residues 178–199 (TSVASAEQDELSQRLARLRDQV) adopt a coiled-coil conformation. The tract at residues 180-196 (VASAEQDELSQRLARLR) is interaction with VPS4A, MITD1 and STAMBP. The interval 180-199 (VASAEQDELSQRLARLRDQV) is interaction with VTA1. Residues 183-199 (AEQDELSQRLARLRDQV) are interaction with VPS4B. An MIT-interacting motif motif is present at residues 186–196 (DELSQRLARLR).

Belongs to the SNF7 family. In terms of assembly, probable peripherally associated component of the endosomal sorting required for transport complex III (ESCRT-III). ESCRT-III components are thought to multimerize to form a flat lattice on the perimeter membrane of the endosome. Several assembly forms of ESCRT-III may exist that interact and act sequentially. Interacts with CHMP1A. Interacts with VTA1; the interaction probably involves the open conformation of CHMP1B. Interacts with CHMP2A. Interacts with VPS4A; the interaction is direct. Interacts with VPS4B; the interaction is direct. Interacts with SPAST (via MIT domain); the interaction is direct. Interacts with IST1. Interacts with MITD1. Interacts with STAMBP.

The protein resides in the cytoplasm. It is found in the cytosol. The protein localises to the endosome. It localises to the late endosome membrane. Probable peripherally associated component of the endosomal sorting required for transport complex III (ESCRT-III) which is involved in multivesicular bodies (MVBs) formation and sorting of endosomal cargo proteins into MVBs. MVBs contain intraluminal vesicles (ILVs) that are generated by invagination and scission from the limiting membrane of the endosome and mostly are delivered to lysosomes enabling degradation of membrane proteins, such as stimulated growth factor receptors, lysosomal enzymes and lipids. The MVB pathway appears to require the sequential function of ESCRT-O, -I,-II and -III complexes. ESCRT-III proteins mostly dissociate from the invaginating membrane before the ILV is released. The ESCRT machinery also functions in topologically equivalent membrane fission events, such as the terminal stages of cytokinesis. ESCRT-III proteins are believed to mediate the necessary vesicle extrusion and/or membrane fission activities, possibly in conjunction with the AAA ATPase VPS4. Involved in cytokinesis. Involved in recruiting VPS4A and/or VPS4B and SPAST to the midbody of dividing cells. The chain is Charged multivesicular body protein 1B1 from Mus musculus (Mouse).